The following is a 544-amino-acid chain: NAD(P)H-quinone oxidoreductase chain 4 (544 aa).

14 helical membrane passes run 29–49 (FPWL…IPLV), 60–80 (WYAL…YLNG), 115–135 (LILL…PVTF), 139–159 (LFFF…AVQD), 161–181 (LLFF…LAIW), 193–213 (FILY…AMAF), 234–254 (GFQA…LPIV), 268–288 (TAPV…YALF), 302–322 (FAPL…LTSF), 339–359 (MGFV…GAML), 360–380 (QMIS…ATYD), 400–422 (MFAM…GFVS), 442–462 (IVID…LLSM), and 488–508 (IYII…PKLV).

It belongs to the complex I subunit 4 family.

It localises to the cellular thylakoid membrane. It catalyses the reaction a plastoquinone + NADH + (n+1) H(+)(in) = a plastoquinol + NAD(+) + n H(+)(out). The catalysed reaction is a plastoquinone + NADPH + (n+1) H(+)(in) = a plastoquinol + NADP(+) + n H(+)(out). Functionally, NDH-1 shuttles electrons from NAD(P)H, via FMN and iron-sulfur (Fe-S) centers, to quinones in the respiratory chain. The immediate electron acceptor for the enzyme in this species is believed to be plastoquinone. Couples the redox reaction to proton translocation (for every two electrons transferred, four hydrogen ions are translocated across the cytoplasmic membrane), and thus conserves the redox energy in a proton gradient. This chain is NAD(P)H-quinone oxidoreductase chain 4, found in Synechococcus sp. (strain RCC307).